The chain runs to 173 residues: Bacterial deubiquitinase-like protein BilC (173 aa).

Zn(2+) contacts are provided by His-103, His-105, and Asp-115.

Belongs to the M67B family. It depends on Zn(2+) as a cofactor.

In terms of biological role, component of the Bil (bacterial ISG15-like) antiviral defense system, composed of BilA, BilB, BilC and BilD. The Bil system specifically conjugates a ubiquitin-like moiety (bilA) to the bacteriophage central tail fiber (CTF, or tip attachment protein J) via reactions involving E1 (bilD) and E2 (bilB). Modifies CTF of phage SECphi27 and SECphi4, which probably interferes with assembly of the phage tail. Also modifies T5 baseplate hub protein pb3 (gene D16), but not gp27 of phage T6 (Bil defends against T6). BilC is a probable metalloprotease that may cleave non-specifically conjugated targets. Bil-encoding bacteria produce mostly defective phage SECphi27, many of which have phage assembly defects, including no tails. SECphi27 phage progeny produced in E.coli with the Bil system inject less DNA into naive host cells, maybe because the phage are less able to adsorb and inject their DNA into host cells. Expression of the Bil system in E.coli (strain MG1655) confers about 100-fold resistance to phage SECphi27, SECphi18, SECphi6, SECphi4 and T5, but not to SECphi17. When cells expressing the Bil system are infected by phage SECphi27 at low multiplicity of infection (0.03 MOI) the culture survives, at 3.0 MOI the culture collapses at the same time as cells without the Bil system. Its function is as follows. Cleaves a ubiquitin-GFP (Ubl-GFP) fusion protein in vivo. The protein is Bacterial deubiquitinase-like protein BilC of Collimonas sp. (strain OK412).